Reading from the N-terminus, the 313-residue chain is Methionyl-tRNA formyltransferase (313 aa).

112 to 115 (SLLP) lines the (6S)-5,6,7,8-tetrahydrofolate pocket.

This sequence belongs to the Fmt family.

The catalysed reaction is L-methionyl-tRNA(fMet) + (6R)-10-formyltetrahydrofolate = N-formyl-L-methionyl-tRNA(fMet) + (6S)-5,6,7,8-tetrahydrofolate + H(+). Functionally, attaches a formyl group to the free amino group of methionyl-tRNA(fMet). The formyl group appears to play a dual role in the initiator identity of N-formylmethionyl-tRNA by promoting its recognition by IF2 and preventing the misappropriation of this tRNA by the elongation apparatus. This Geotalea uraniireducens (strain Rf4) (Geobacter uraniireducens) protein is Methionyl-tRNA formyltransferase.